Reading from the N-terminus, the 366-residue chain is Phospho-N-acetylmuramoyl-pentapeptide-transferase (366 aa).

A run of 10 helical transmembrane segments spans residues 27–47 (AALFTSALIVFLFGPTIINSL), 71–91 (TPTMGGLMILAGIVGASLLWA), 93–113 (LSNVYVVATLLVTLGFGAIGF), 134–154 (LGIEFIIAGIAVYFMMRTALA), 174–194 (FLINLGIMFVVFGGFVIVGAG), 205–225 (GLAIVPVMIAAASFGVIAYLA), 245–265 (LAVVLGAVIGAGLGFLWFNAP), 268–288 (AIFMGDTGSLALGGTIGTVAV), 294–314 (IVMAIIGGLFVMETLSVIIQV), and 343–363 (QVVIRFWIIAVGLALLGLSTL).

This sequence belongs to the glycosyltransferase 4 family. MraY subfamily. It depends on Mg(2+) as a cofactor.

The protein resides in the cell inner membrane. It catalyses the reaction UDP-N-acetyl-alpha-D-muramoyl-L-alanyl-gamma-D-glutamyl-meso-2,6-diaminopimeloyl-D-alanyl-D-alanine + di-trans,octa-cis-undecaprenyl phosphate = di-trans,octa-cis-undecaprenyl diphospho-N-acetyl-alpha-D-muramoyl-L-alanyl-D-glutamyl-meso-2,6-diaminopimeloyl-D-alanyl-D-alanine + UMP. It participates in cell wall biogenesis; peptidoglycan biosynthesis. Catalyzes the initial step of the lipid cycle reactions in the biosynthesis of the cell wall peptidoglycan: transfers peptidoglycan precursor phospho-MurNAc-pentapeptide from UDP-MurNAc-pentapeptide onto the lipid carrier undecaprenyl phosphate, yielding undecaprenyl-pyrophosphoryl-MurNAc-pentapeptide, known as lipid I. This is Phospho-N-acetylmuramoyl-pentapeptide-transferase from Rhizobium etli (strain CIAT 652).